A 123-amino-acid chain; its full sequence is MSGKHPLVQAVENAQLKSDIPAFAPGDTVIVQVKVKEGDRERLQAFEGVVIAKKNRGLNSAFTVRKISSGVGVERVFQTHSPVVAKIEVKRRGDVRRAKLYYLRELSGKAARIREKLPARKRG.

It belongs to the bacterial ribosomal protein bL19 family.

Its function is as follows. This protein is located at the 30S-50S ribosomal subunit interface and may play a role in the structure and function of the aminoacyl-tRNA binding site. In Acinetobacter baylyi (strain ATCC 33305 / BD413 / ADP1), this protein is Large ribosomal subunit protein bL19.